Consider the following 359-residue polypeptide: Protein mab-21-like 2 (359 aa).

The protein belongs to the mab-21 family.

It is found in the nucleus. It localises to the cytoplasm. In terms of biological role, required for several aspects of embryonic development including normal development of the eye. In Homo sapiens (Human), this protein is Protein mab-21-like 2 (MAB21L2).